Consider the following 857-residue polypeptide: Leucine--tRNA ligase (857 aa).

The short motif at 42-52 is the 'HIGH' region element; that stretch reads PYPSGRLHMGH. Positions 617–621 match the 'KMSKS' region motif; that stretch reads KMSKS. ATP is bound at residue Lys-620.

It belongs to the class-I aminoacyl-tRNA synthetase family.

It localises to the cytoplasm. The enzyme catalyses tRNA(Leu) + L-leucine + ATP = L-leucyl-tRNA(Leu) + AMP + diphosphate. The chain is Leucine--tRNA ligase from Vibrio vulnificus (strain CMCP6).